The sequence spans 348 residues: Elongation factor Ts (348 aa).

The tract at residues 80-83 is involved in Mg(2+) ion dislocation from EF-Tu; the sequence is TDFV.

Belongs to the EF-Ts family.

The protein localises to the cytoplasm. Functionally, associates with the EF-Tu.GDP complex and induces the exchange of GDP to GTP. It remains bound to the aminoacyl-tRNA.EF-Tu.GTP complex up to the GTP hydrolysis stage on the ribosome. The protein is Elongation factor Ts of Streptococcus mutans serotype c (strain ATCC 700610 / UA159).